Consider the following 297-residue polypeptide: tRNA (guanine-N(7)-)-methyltransferase (297 aa).

Residues glutamate 22, glutamate 47, aspartate 74, and aspartate 97 each contribute to the S-adenosyl-L-methionine site. The active site involves aspartate 97. Substrate contacts are provided by residues lysine 101, aspartate 133, and threonine 165–glutamate 168.

Belongs to the class I-like SAM-binding methyltransferase superfamily. TrmB family.

It carries out the reaction guanosine(46) in tRNA + S-adenosyl-L-methionine = N(7)-methylguanosine(46) in tRNA + S-adenosyl-L-homocysteine. It participates in tRNA modification; N(7)-methylguanine-tRNA biosynthesis. Functionally, catalyzes the formation of N(7)-methylguanine at position 46 (m7G46) in tRNA. The polypeptide is tRNA (guanine-N(7)-)-methyltransferase (Aquifex aeolicus (strain VF5)).